A 566-amino-acid polypeptide reads, in one-letter code: Glucose-6-phosphate isomerase (566 aa).

The Proton donor role is filled by E374. Residues H405 and K529 contribute to the active site.

Belongs to the GPI family.

The protein localises to the cytoplasm. The catalysed reaction is alpha-D-glucose 6-phosphate = beta-D-fructose 6-phosphate. It functions in the pathway carbohydrate biosynthesis; gluconeogenesis. Its pathway is carbohydrate degradation; glycolysis; D-glyceraldehyde 3-phosphate and glycerone phosphate from D-glucose: step 2/4. In terms of biological role, catalyzes the reversible isomerization of glucose-6-phosphate to fructose-6-phosphate. The chain is Glucose-6-phosphate isomerase from Bifidobacterium longum (strain NCC 2705).